Reading from the N-terminus, the 102-residue chain is Exocrine gland-secreted peptide 1 (102 aa).

Positions 1–22 (MTSLPVLLFLIILLLPSMITEG) are cleaved as a signal peptide. C63 and C95 form a disulfide bridge.

Belongs to the exocrine gland-secreted peptide family. As to quaternary structure, monomer. In terms of tissue distribution, expressed in the extraorbital lacrimal gland from where it is secreted into tears.

The protein localises to the secreted. Male-specific phermone which is recognized by the Vmn2r116/V2rp5 receptor in the vomeronasal organ (VNO) and enhances female sexual receptive behavior (lordosis) upon male mounting, resulting in successful copulation. This Mus musculus (Mouse) protein is Exocrine gland-secreted peptide 1.